The following is a 915-amino-acid chain: Isoleucine--tRNA ligase (915 aa).

The short motif at 64–74 is the 'HIGH' region element; sequence PYANGNFHVGH. Glu-557 is a binding site for L-isoleucyl-5'-AMP. Residues 598–602 carry the 'KMSKS' region motif; sequence AMSKS. Position 601 (Lys-601) interacts with ATP. Positions 887, 890, 902, and 905 each coordinate Zn(2+).

Belongs to the class-I aminoacyl-tRNA synthetase family. IleS type 1 subfamily. In terms of assembly, monomer. Zn(2+) serves as cofactor.

It localises to the cytoplasm. The catalysed reaction is tRNA(Ile) + L-isoleucine + ATP = L-isoleucyl-tRNA(Ile) + AMP + diphosphate. In terms of biological role, catalyzes the attachment of isoleucine to tRNA(Ile). As IleRS can inadvertently accommodate and process structurally similar amino acids such as valine, to avoid such errors it has two additional distinct tRNA(Ile)-dependent editing activities. One activity is designated as 'pretransfer' editing and involves the hydrolysis of activated Val-AMP. The other activity is designated 'posttransfer' editing and involves deacylation of mischarged Val-tRNA(Ile). This chain is Isoleucine--tRNA ligase, found in Leptospira biflexa serovar Patoc (strain Patoc 1 / ATCC 23582 / Paris).